Reading from the N-terminus, the 124-residue chain is uncharacterized protein (124 aa).

An N-terminal signal peptide occupies residues 1–18; that stretch reads MHIIKTLISVGVAFSLSA. Residue cysteine 19 is the site of N-palmitoyl cysteine attachment. A lipid anchor (S-diacylglycerol cysteine) is attached at cysteine 19.

Its subcellular location is the cell membrane. This is an uncharacterized protein from Pasteurella multocida (strain Pm70).